The chain runs to 983 residues: Ephrin type-A receptor 3 (983 aa).

Positions 1–20 (MDCQLSILLLLSCSVLDSFG) are cleaved as a signal peptide. The Extracellular portion of the chain corresponds to 21-541 (ELIPQPSNEV…SFSISGESSQ (521 aa)). An Eph LBD domain is found at 29-207 (EVNLLDSKTI…YFKKCPFTVK (179 aa)). N232, N337, N391, N404, and N493 each carry an N-linked (GlcNAc...) asparagine glycan. Fibronectin type-III domains lie at 325–435 (PPSS…TNQA) and 436–531 (APSP…TSPD). A helical membrane pass occupies residues 542-565 (VVMIAISAAVAIILLTVVIYVLIG). Residues 566-983 (RFCGYKSKHG…TQSKNGPVPV (418 aa)) lie on the Cytoplasmic side of the membrane. Residues Y596 and Y602 each carry the phosphotyrosine; by autocatalysis modification. The Protein kinase domain occupies 621 to 882 (ISIDKVVGAG…QIVSILDKLI (262 aa)). Residues 628–633 (GAGEFG), K653, and 700–706 (EYMENGS) each bind ATP. Y701 carries the post-translational modification Phosphotyrosine; by autocatalysis. D746 (proton acceptor) is an active-site residue. Residue 750 to 751 (RN) participates in ATP binding. Y779 carries the post-translational modification Phosphotyrosine; by autocatalysis. The SAM domain occupies 911–975 (TTFRTTGDWL…ISSIKALETQ (65 aa)). Phosphotyrosine is present on Y937. Positions 981-983 (VPV) match the PDZ-binding motif.

Belongs to the protein kinase superfamily. Tyr protein kinase family. Ephrin receptor subfamily. Heterotetramer upon binding of the ligand. The heterotetramer is composed of an ephrin dimer and a receptor dimer. Oligomerization is probably required to induce biological responses. Forms a ternary EFNA5-EPHA3-ADAM10 complex mediating EFNA5 extracellular domain shedding by ADAM10 which regulates the EFNA5-EPHA3 complex internalization and function. Interacts with NCK1 (via SH2 domain); mediates EFNA5-EPHA3 signaling. Interacts (phosphorylated) with PTPN1; dephosphorylates EPHA3 and may regulate its trafficking and function. Interacts (phosphorylated) with CRK; mediates EFNA5-EPHA3 signaling through RHOA GTPase activation. Post-translationally, autophosphorylates upon activation by EFNA5. Phosphorylation on Tyr-602 mediates interaction with NCK1. Dephosphorylated by PTPN1. As to expression, widely expressed. Highest level in placenta.

It is found in the cell membrane. Its subcellular location is the secreted. It catalyses the reaction L-tyrosyl-[protein] + ATP = O-phospho-L-tyrosyl-[protein] + ADP + H(+). In terms of biological role, receptor tyrosine kinase which binds promiscuously membrane-bound ephrin family ligands residing on adjacent cells, leading to contact-dependent bidirectional signaling into neighboring cells. The signaling pathway downstream of the receptor is referred to as forward signaling while the signaling pathway downstream of the ephrin ligand is referred to as reverse signaling. Highly promiscuous for ephrin-A ligands it binds preferentially EFNA5. Upon activation by EFNA5 regulates cell-cell adhesion, cytoskeletal organization and cell migration. Plays a role in cardiac cells migration and differentiation and regulates the formation of the atrioventricular canal and septum during development probably through activation by EFNA1. Involved in the retinotectal mapping of neurons. May also control the segregation but not the guidance of motor and sensory axons during neuromuscular circuit development. The chain is Ephrin type-A receptor 3 (EPHA3) from Homo sapiens (Human).